The primary structure comprises 356 residues: Acyl-coenzyme A diphosphatase NUDT19 (356 aa).

The Nudix hydrolase domain maps to 10-241; the sequence is AATVMLAAGW…IWLAPPQFYE (232 aa). The tract at residues 72–94 is disordered; sequence PRFGLGPEPPRQPPFPGLSHGDA. Residues 78–87 show a composition bias toward pro residues; sequence PEPPRQPPFP. A Nudix box motif is present at residues 97–118; sequence AALPDDVALRICAIRETFEEAG. The Mg(2+) site is built by glutamate 112 and glutamate 116. The residue at position 299 (lysine 299) is an N6-succinyllysine. A Microbody targeting signal motif is present at residues 354–356; it reads ARL.

It belongs to the Nudix hydrolase family. In terms of assembly, monomer. Mg(2+) is required as a cofactor. The cofactor is Mn(2+).

The protein localises to the peroxisome. The enzyme catalyses an acyl-CoA + H2O = an acyl-4'-phosphopantetheine + adenosine 3',5'-bisphosphate + 2 H(+). The catalysed reaction is CoA + H2O = (R)-4'-phosphopantetheine + adenosine 3',5'-bisphosphate + 2 H(+). It carries out the reaction hexanoyl-CoA + H2O = hexanoyl-4'-phosphopantetheine + adenosine 3',5'-bisphosphate + 2 H(+). It catalyses the reaction octanoyl-CoA + H2O = S-octanoyl-4'-phosphopantetheine + adenosine 3',5'-bisphosphate + 2 H(+). The enzyme catalyses butanoyl-CoA + H2O = S-butanoyl-4'-phosphopantetheine + adenosine 3',5'-bisphosphate + 2 H(+). The catalysed reaction is propanoyl-CoA + H2O = propanoyl-4'-phosphopantetheine + adenosine 3',5'-bisphosphate + 2 H(+). It carries out the reaction malonyl-CoA + H2O = malonyl-4'-phosphopantetheine + adenosine 3',5'-bisphosphate + 2 H(+). It catalyses the reaction succinyl-CoA + H2O = succinyl-4'-phosphopantetheine + adenosine 3',5'-bisphosphate + 2 H(+). The enzyme catalyses choloyl-CoA + H2O = S-choloyl-4'-phosphopantetheine + adenosine 3',5'-bisphosphate + 2 H(+). The catalysed reaction is 4,8-dimethylnonanoyl-CoA + H2O = S-(4,8-dimethylnonanoyl)-4'-phosphopantetheine + adenosine 3',5'-bisphosphate + 2 H(+). It carries out the reaction (9Z,12Z,15Z)-octadecatrienoyl-CoA + H2O = S-(9Z,12Z,15Z-octadecatrienoyl)-4'-phosphopantetheine + adenosine 3',5'-bisphosphate + 2 H(+). It catalyses the reaction (9Z,12Z)-octadecadienoyl-CoA + H2O = S-(9Z,12Z-octadecadienoyl)-4'-phosphopantetheine + adenosine 3',5'-bisphosphate + 2 H(+). The enzyme catalyses (9Z)-hexadecenoyl-CoA + H2O = S-(9Z-hexadecenoyl)-4'-phosphopantetheine + adenosine 3',5'-bisphosphate + 2 H(+). The catalysed reaction is (9Z)-tetradecenoyl-CoA + H2O = S-(9Z-tetradecenoyl)-4'-phosphopantetheine + adenosine 3',5'-bisphosphate + 2 H(+). It carries out the reaction (6Z)-octenoyl-CoA + H2O = S-(6Z-octenoyl)-4'-phosphopantetheine + adenosine 3',5'-bisphosphate + 2 H(+). It catalyses the reaction hexadecanoyl-CoA + H2O = S-hexadecanoyl-4'-phosphopantetheine + adenosine 3',5'-bisphosphate + 2 H(+). The enzyme catalyses tetradecanoyl-CoA + H2O = tetradecanoyl-4'-phosphopantetheine + adenosine 3',5'-bisphosphate + 2 H(+). The catalysed reaction is dodecanoyl-CoA + H2O = S-dodecanoyl-4'-phosphopantetheine + adenosine 3',5'-bisphosphate + 2 H(+). It carries out the reaction a 5'-end CoA-ribonucleoside in mRNA + H2O = a 5'-end phospho-adenosine-phospho-ribonucleoside in mRNA + (R)-4'-phosphopantetheine + 2 H(+). In terms of biological role, fatty acyl-coenzyme A (CoA) diphosphatase that hydrolyzes fatty acyl-CoA to yield acyl-4'-phosphopantetheine and adenosine 3',5'-bisphosphate. Mediates the hydrolysis of a wide range of CoA esters, including choloyl-CoA and branched-chain fatty-acyl-CoA esters and at low substrate concentrations medium and long-chain fatty-acyl-CoA esters are the primary substrates. Highest activity seen with medium-chain acyl-CoA esters and higher rates of activity seen with the unsaturated acyl-CoA esters compared with the saturated esters. Exhibits decapping activity towards dpCoA-capped RNAs in vitro. In Mus saxicola (Brown spiny mouse), this protein is Acyl-coenzyme A diphosphatase NUDT19 (Nudt19).